A 351-amino-acid polypeptide reads, in one-letter code: DNA polymerase IV (351 aa).

A UmuC domain is found at 4 to 185; the sequence is IIHIDMDCFF…LPLAKIPGVG (182 aa). 2 residues coordinate Mg(2+): Asp-8 and Asp-103. Glu-104 is an active-site residue.

This sequence belongs to the DNA polymerase type-Y family. Monomer. Mg(2+) serves as cofactor.

Its subcellular location is the cytoplasm. It carries out the reaction DNA(n) + a 2'-deoxyribonucleoside 5'-triphosphate = DNA(n+1) + diphosphate. Functionally, poorly processive, error-prone DNA polymerase involved in untargeted mutagenesis. Copies undamaged DNA at stalled replication forks, which arise in vivo from mismatched or misaligned primer ends. These misaligned primers can be extended by PolIV. Exhibits no 3'-5' exonuclease (proofreading) activity. May be involved in translesional synthesis, in conjunction with the beta clamp from PolIII. This Salmonella paratyphi A (strain ATCC 9150 / SARB42) protein is DNA polymerase IV.